The sequence spans 844 residues: Putative ubiquitin thioesterase 232R (844 aa).

Disordered regions lie at residues 136 to 223 (NSST…DEAE), 261 to 287 (SRRK…PPME), 326 to 377 (LLNG…PELT), and 422 to 541 (QKKQ…KLSV). Residues 137–216 (SSTRSRSPSV…PSRQSVRQSS (80 aa)) show a composition bias toward low complexity. Composition is skewed to low complexity over residues 332–341 (RPSPSLPQSR) and 354–364 (RSPSVGSPSVR). Pro residues predominate over residues 429 to 438 (SPSPTPPSPV). The segment covering 472 to 485 (VQKKMGKSGEREPK) has biased composition (basic and acidic residues). The segment covering 504-518 (SLRSRLSTQQQTQQS) has biased composition (low complexity). Residues 526 to 535 (ESIKPEESVR) are compositionally biased toward basic and acidic residues. Positions 590 to 725 (YTVKQVSGDG…NYHYTSLVPI (136 aa)) constitute an OTU domain. The active site involves Asp-598. Cys-601 (nucleophile) is an active-site residue. Residue His-718 is part of the active site.

The catalysed reaction is Thiol-dependent hydrolysis of ester, thioester, amide, peptide and isopeptide bonds formed by the C-terminal Gly of ubiquitin (a 76-residue protein attached to proteins as an intracellular targeting signal).. In terms of biological role, hydrolase that can remove conjugated ubiquitin from proteins and may therefore play an important regulatory role at the level of protein turnover by preventing degradation. This chain is Putative ubiquitin thioesterase 232R, found in Aedes vexans (Inland floodwater mosquito).